Consider the following 167-residue polypeptide: MSKKQTKDKANGAKATKTIALNKRARHEYHLEERYEAGLALQGWEVKAIRAGRANIVDGYAYVRSGEIYLIGAQITPLIQASTHTVPVERRDRKLLLHRAEIDKVLTRVEREGYTLVPTALYWSSNKVKLEIALAKGKQNHDKRDAAKDRDWQRDKQRVMRRHNRDA.

Residues 139–158 are compositionally biased toward basic and acidic residues; the sequence is QNHDKRDAAKDRDWQRDKQR. Residues 139–167 are disordered; sequence QNHDKRDAAKDRDWQRDKQRVMRRHNRDA.

It belongs to the SmpB family.

The protein resides in the cytoplasm. Functionally, required for rescue of stalled ribosomes mediated by trans-translation. Binds to transfer-messenger RNA (tmRNA), required for stable association of tmRNA with ribosomes. tmRNA and SmpB together mimic tRNA shape, replacing the anticodon stem-loop with SmpB. tmRNA is encoded by the ssrA gene; the 2 termini fold to resemble tRNA(Ala) and it encodes a 'tag peptide', a short internal open reading frame. During trans-translation Ala-aminoacylated tmRNA acts like a tRNA, entering the A-site of stalled ribosomes, displacing the stalled mRNA. The ribosome then switches to translate the ORF on the tmRNA; the nascent peptide is terminated with the 'tag peptide' encoded by the tmRNA and targeted for degradation. The ribosome is freed to recommence translation, which seems to be the essential function of trans-translation. The polypeptide is SsrA-binding protein (Xanthomonas euvesicatoria pv. vesicatoria (strain 85-10) (Xanthomonas campestris pv. vesicatoria)).